The following is a 248-amino-acid chain: MFLAKALLEGADRGLGEALGGLFGGGGQRREGGGRNIGGIVGGIVNFISEAAAAQYTPEPPPTQQHFTSVEASESEEVRRFRQQFTQLAGPDMEVGATDLMNILNKVLSKHKDLKTDGFSLDTCRSIVSVMDSDTTGKLGFEEFKYLWNNIKKWQCVYKQYDRDHSGSLGSSQLRGALQAAGFQLNEQLYQMIVRRYANEDGDMDFNNFISCLVRLDAMFRAFKSLDRDRDGLIQVSIKEWLQLTMYS.

Positions 89, 92, 94, 117, 132, 134, 136, 138, 143, 162, 164, 166, and 205 each coordinate Ca(2+). 4 consecutive EF-hand domains span residues 119–152 (FSLD…NNIK), 149–184 (NNIK…AGFQ), 185–213 (LNEQ…ISCL), and 214–248 (VRLD…TMYS).

In terms of assembly, heterodimer of a large (catalytic) and a small (regulatory) subunit.

Its subcellular location is the cytoplasm. The protein resides in the cell membrane. In terms of biological role, calcium-regulated non-lysosomal thiol-protease which catalyzes limited proteolysis of substrates involved in cytoskeletal remodeling and signal transduction. This small subunit may act as a tissue-specific chaperone of the large subunit, possibly by helping it fold into its correct conformation for activity. This is Calpain small subunit 2 (CAPNS2) from Homo sapiens (Human).